Consider the following 225-residue polypeptide: PKHD-type hydroxylase YbiX (225 aa).

One can recognise a Fe2OG dioxygenase domain in the interval 78–177 (TLSTPLFNRY…RVASFMWIQS (100 aa)). Fe cation-binding residues include H96, D98, and H158. R168 is a binding site for 2-oxoglutarate.

Fe(2+) is required as a cofactor. It depends on L-ascorbate as a cofactor.

The chain is PKHD-type hydroxylase YbiX from Shigella sonnei (strain Ss046).